The chain runs to 216 residues: 3-isopropylmalate dehydratase small subunit (216 aa).

The protein belongs to the LeuD family. LeuD type 1 subfamily. Heterodimer of LeuC and LeuD.

It carries out the reaction (2R,3S)-3-isopropylmalate = (2S)-2-isopropylmalate. It participates in amino-acid biosynthesis; L-leucine biosynthesis; L-leucine from 3-methyl-2-oxobutanoate: step 2/4. Its function is as follows. Catalyzes the isomerization between 2-isopropylmalate and 3-isopropylmalate, via the formation of 2-isopropylmaleate. This chain is 3-isopropylmalate dehydratase small subunit, found in Burkholderia ambifaria (strain MC40-6).